The following is a 278-amino-acid chain: Secoisolariciresinol dehydrogenase (278 aa).

Residues 23–28 (GGAGGI), aspartate 47, valine 73, and asparagine 99 each bind NAD(+). Substrate-binding residues include serine 104 and serine 164. Residue tyrosine 167 is the Proton donor/acceptor of the active site. The NAD(+) site is built by lysine 171 and valine 200.

The protein belongs to the short-chain dehydrogenases/reductases (SDR) family. Homotetramer. Mostly expressed in stems and rhizomes, and, to a lower extent, in leaves.

It carries out the reaction (-)-secoisolariciresinol + 2 NAD(+) = (-)-matairesinol + 2 NADH + 2 H(+). The protein operates within aromatic compound metabolism; phenylpropanoid biosynthesis. Oxidoreductase involved in lignan biosynthesis. Also involved in the biosynthesis of etoposide, a chemotherapeutic compound of the topoisomerase inhibitor family. Catalyzes the stereospecific conversion of (-)-secoisolariciresinol to (-)-matairesinol via a lactol intermediate. In Sinopodophyllum hexandrum (Himalayan may apple), this protein is Secoisolariciresinol dehydrogenase.